Here is a 267-residue protein sequence, read N- to C-terminus: Matrilysin (267 aa).

A signal peptide spans 1–17 (MRLTVLCAVCLLPGSLA). Positions 18 to 94 (LPLPQEAGGM…PRCGVPDVAE (77 aa)) are cleaved as a propeptide — activation peptide. A Cysteine switch motif is present at residues 85 to 92 (PRCGVPDV). Cys-87 lines the Zn(2+) pocket. Asp-153 serves as a coordination point for Ca(2+). Zn(2+) contacts are provided by His-163 and Asp-165. Residues Asp-170, Gly-171, Gly-173, and Thr-175 each contribute to the Ca(2+) site. Residue His-178 participates in Zn(2+) binding. Ca(2+) is bound by residues Gly-185, Gly-187, and Asp-189. Zn(2+) is bound at residue His-191. Ca(2+)-binding residues include Asp-193 and Glu-196. His-214 serves as a coordination point for Zn(2+). Glu-215 is a catalytic residue. Residues His-218 and His-224 each coordinate Zn(2+).

The protein belongs to the peptidase M10A family. It depends on Ca(2+) as a cofactor. The cofactor is Zn(2+).

Its subcellular location is the secreted. The protein localises to the extracellular space. The protein resides in the extracellular matrix. It catalyses the reaction Cleavage of 14-Ala-|-Leu-15 and 16-Tyr-|-Leu-17 in B chain of insulin. No action on collagen types I, II, IV, V. Cleaves gelatin chain alpha2(I) &gt; alpha1(I).. In terms of biological role, degrades casein, gelatins of types I, III, IV, and V, and fibronectin. Activates procollagenase. This chain is Matrilysin (MMP7), found in Homo sapiens (Human).